A 581-amino-acid chain; its full sequence is UvrABC system protein C (581 aa).

The GIY-YIG domain maps to 15 to 94; that stretch reads REPGVYLFEQ…IKRHRPPYNV (80 aa). Positions 202 to 237 constitute a UVR domain; the sequence is GVLADPLRREMEAAAQNQEFERAANLRDKLGAVEAL.

It belongs to the UvrC family. As to quaternary structure, interacts with UvrB in an incision complex.

The protein resides in the cytoplasm. In terms of biological role, the UvrABC repair system catalyzes the recognition and processing of DNA lesions. UvrC both incises the 5' and 3' sides of the lesion. The N-terminal half is responsible for the 3' incision and the C-terminal half is responsible for the 5' incision. The protein is UvrABC system protein C of Haloarcula marismortui (strain ATCC 43049 / DSM 3752 / JCM 8966 / VKM B-1809) (Halobacterium marismortui).